A 140-amino-acid chain; its full sequence is Large ribosomal subunit protein uL15 (140 aa).

A disordered region spans residues 1–31 (MDTKKFRGSRTCGGGTHKNRRGAGNRGGRGK).

The protein belongs to the universal ribosomal protein uL15 family. As to quaternary structure, part of the 50S ribosomal subunit.

Its function is as follows. Binds to the 23S rRNA. The polypeptide is Large ribosomal subunit protein uL15 (Methanosarcina barkeri (strain Fusaro / DSM 804)).